Here is a 267-residue protein sequence, read N- to C-terminus: Protein HesA, heterocyst (267 aa).

The protein belongs to the HesA/MoeB/ThiF family.

The sequence is that of Protein HesA, heterocyst (hesA1) from Trichormus variabilis (strain ATCC 29413 / PCC 7937) (Anabaena variabilis).